We begin with the raw amino-acid sequence, 262 residues long: Thrombin-like enzyme gyroxin B1.4 (262 aa).

Positions 1 to 18 (MVLIRVLANLLILQLSYA) are cleaved as a signal peptide. Positions 19 to 262 (QKSSELVIGG…AGNTIVNCPP (244 aa)) are excised as a propeptide. Residues 25–253 (VIGGDECNIN…HLDWIQSIIA (229 aa)) enclose the Peptidase S1 domain. Intrachain disulfides connect Cys-31/Cys-165, Cys-52/Cys-68, Cys-102/Cys-260, Cys-144/Cys-214, Cys-176/Cys-193, and Cys-204/Cys-229. His-67 (charge relay system) is an active-site residue. A glycan (N-linked (GlcNAc...) asparagine) is linked at Asn-105. The Charge relay system role is filled by Asp-112. The active-site Charge relay system is the Ser-208.

It belongs to the peptidase S1 family. Snake venom subfamily. In terms of assembly, monomer. Expressed by the venom gland.

It localises to the secreted. In terms of biological role, thrombin-like snake venom serine protease. Displays a specificity similar to trypsin. Releases only fibrinopeptide A in the conversion of fibrinogen to fibrin. Shows coagulant, esterase and amidase activities. Reversibly increases the permeability of the blood brain barrier (BBB) in mice. Induces the barrel rotation syndrome in mice, which is manifested by gyroxin-like, rapid rolling motions. This syndrome may be due to its effect on BBB permeability, and certainly also to other actions affecting endogenous substrates present in the endothelium, nervous tissues or blood. The polypeptide is Thrombin-like enzyme gyroxin B1.4 (Crotalus durissus terrificus (South American rattlesnake)).